The primary structure comprises 1048 residues: Selenate reductase subunit A (1048 aa).

A signal peptide (tat-type signal) is located at residues 1–39 (MENQHQKFISRRNFIKTSALLGGTAFLGTGLPNIKKTYS). Residues 56-129 (ENILYSACLQ…AGIQHAYDPY (74 aa)) enclose the 4Fe-4S Mo/W bis-MGD-type domain. Residues Cys-63, Cys-66, Cys-70, and Cys-115 each contribute to the [4Fe-4S] cluster site. Cys-270 contributes to the Mo-bis(molybdopterin guanine dinucleotide) binding site.

The protein belongs to the prokaryotic molybdopterin-containing oxidoreductase family. The complex is composed of three subunits: SrdA, SrdB and SrdC. [4Fe-4S] cluster is required as a cofactor. It depends on Mo-bis(molybdopterin guanine dinucleotide) as a cofactor. Post-translationally, predicted to be exported by the Tat system. The position of the signal peptide cleavage has not been experimentally proven.

The protein resides in the secreted. It catalyses the reaction selenite + a quinone + H2O = selenate + a quinol. Component of the respiratory selenate reductase complex, which catalyzes the reduction of selenate to selenite. SrdA is probably the catalytic subunit that reduces selenate. This chain is Selenate reductase subunit A, found in Mesobacillus selenatarsenatis (strain DSM 18680 / JCM 14380 / FERM P-15431 / SF-1).